The chain runs to 251 residues: Hydroxyacylglutathione hydrolase (251 aa).

Positions 53, 55, 57, 58, 110, 127, and 165 each coordinate Zn(2+).

It belongs to the metallo-beta-lactamase superfamily. Glyoxalase II family. As to quaternary structure, monomer. It depends on Zn(2+) as a cofactor.

The catalysed reaction is an S-(2-hydroxyacyl)glutathione + H2O = a 2-hydroxy carboxylate + glutathione + H(+). The protein operates within secondary metabolite metabolism; methylglyoxal degradation; (R)-lactate from methylglyoxal: step 2/2. In terms of biological role, thiolesterase that catalyzes the hydrolysis of S-D-lactoyl-glutathione to form glutathione and D-lactic acid. This is Hydroxyacylglutathione hydrolase from Salmonella paratyphi C (strain RKS4594).